A 215-amino-acid polypeptide reads, in one-letter code: Rac-like GTP-binding protein ARAC10 (215 aa).

15-22 contributes to the GTP binding site; it reads GDGAVGKT. Residues 37–45 carry the Effector region motif; the sequence is YIPTVFDNF. GTP is bound by residues 62 to 66 and 120 to 123; these read DTAGQ and TKLD. S-palmitoyl cysteine attachment occurs at residues Cys202 and Cys208.

The protein belongs to the small GTPase superfamily. Rho family. In terms of assembly, component of the active ARAC10-IRC5-KIN13A complex. Interacts with ICR5.

The protein resides in the membrane. It is found in the cytoplasm. It localises to the cytoskeleton. Functionally, involved in local disassembly of cortical microtubules when associated with ICR5 and KIN13A. The polypeptide is Rac-like GTP-binding protein ARAC10 (ARAC10) (Arabidopsis thaliana (Mouse-ear cress)).